A 316-amino-acid chain; its full sequence is Geminin coiled-coil domain-containing protein 1 (316 aa).

The stretch at 82-117 (QISANKQLQDTLLQKEEELSRLHEENNKLKEFLNSA) forms a coiled coil. Polar residues-rich tracts occupy residues 134–155 (GQSS…STPG) and 207–234 (MSLQ…QAAT). Disordered regions lie at residues 134–160 (GQSS…KAKR) and 207–269 (MSLQ…DVAP). Thr153 bears the Phosphothreonine; by cdk2 mark. Low complexity predominate over residues 235–252 (SCSLSPSQCSSASLPESE). A compositionally biased stretch (polar residues) spans 253 to 262 (TASPLSSPTY).

Belongs to the GEMC1 family. In terms of assembly, interacts with topbp1. Interacts with Cdc45l and the kinase cdk2-cyclin-E (the interaction is direct). In terms of processing, highly phosphorylated by cdk2; stimulates initiation of DNA replication. As to expression, expressed in most tissues. Enriched in proliferating cells from skin and gut.

It is found in the nucleus. Its function is as follows. Regulator of DNA replication. Promotes initiation of chromosomal DNA replication by mediating topbp1- and cdk2-dependent recruitment of cdc45l onto replication origins. The chain is Geminin coiled-coil domain-containing protein 1 (gmnc) from Xenopus laevis (African clawed frog).